The chain runs to 77 residues: U8-lycotoxin-Ls1q (77 aa).

A signal peptide spans 1 to 20 (MKLMIFAGLVLFAIVSLIEA). A propeptide spanning residues 21–26 (QAEHEK) is cleaved from the precursor.

The protein belongs to the neurotoxin 19 (CSTX) family. 08 (U8-Lctx) subfamily. Post-translationally, contains 4 disulfide bonds. Expressed by the venom gland.

The protein resides in the secreted. This Lycosa singoriensis (Wolf spider) protein is U8-lycotoxin-Ls1q.